The primary structure comprises 313 residues: HPr kinase/phosphorylase (313 aa).

Residues histidine 140 and lysine 161 contribute to the active site. 155–162 (GDSGVGKS) contributes to the ATP binding site. Serine 162 is a binding site for Mg(2+). The Proton acceptor; for phosphorylation activity. Proton donor; for dephosphorylation activity role is filled by aspartate 179. The tract at residues 203–212 (LEIRGIGIID) is important for the catalytic mechanism of both phosphorylation and dephosphorylation. Residue glutamate 204 coordinates Mg(2+). The active site involves arginine 245. The tract at residues 266-271 (PVKVGR) is important for the catalytic mechanism of dephosphorylation.

This sequence belongs to the HPrK/P family. As to quaternary structure, homohexamer. Requires Mg(2+) as cofactor.

The enzyme catalyses [HPr protein]-L-serine + ATP = [HPr protein]-O-phospho-L-serine + ADP + H(+). It catalyses the reaction [HPr protein]-O-phospho-L-serine + phosphate + H(+) = [HPr protein]-L-serine + diphosphate. In terms of biological role, catalyzes the ATP- as well as the pyrophosphate-dependent phosphorylation of a specific serine residue in HPr, a phosphocarrier protein of the phosphoenolpyruvate-dependent sugar phosphotransferase system (PTS). HprK/P also catalyzes the pyrophosphate-producing, inorganic phosphate-dependent dephosphorylation (phosphorolysis) of seryl-phosphorylated HPr (P-Ser-HPr). The two antagonistic activities of HprK/P are regulated by several intracellular metabolites, which change their concentration in response to the absence or presence of rapidly metabolisable carbon sources (glucose, fructose, etc.) in the growth medium. Therefore, by controlling the phosphorylation state of HPr, HPrK/P is a sensor enzyme that plays a major role in the regulation of carbon metabolism and sugar transport: it mediates carbon catabolite repression (CCR), and regulates PTS-catalyzed carbohydrate uptake and inducer exclusion. The chain is HPr kinase/phosphorylase from Latilactobacillus sakei subsp. sakei (strain 23K) (Lactobacillus sakei subsp. sakei).